Consider the following 394-residue polypeptide: Chalcone synthase 4 (394 aa).

Residue C165 is part of the active site.

Belongs to the thiolase-like superfamily. Chalcone/stilbene synthases family.

It catalyses the reaction (E)-4-coumaroyl-CoA + 3 malonyl-CoA + 3 H(+) = 2',4,4',6'-tetrahydroxychalcone + 3 CO2 + 4 CoA. It functions in the pathway secondary metabolite biosynthesis; flavonoid biosynthesis. Its function is as follows. The primary product of this enzyme is 4,2',4',6'-tetrahydroxychalcone (also termed naringenin-chalcone or chalcone) which can under specific conditions spontaneously isomerize into naringenin. The polypeptide is Chalcone synthase 4 (CHS4) (Bromheadia finlaysoniana (Orchid)).